Here is a 200-residue protein sequence, read N- to C-terminus: Large ribosomal subunit protein uL4 (200 aa).

The interval Arg-43 to Gly-65 is disordered.

Belongs to the universal ribosomal protein uL4 family. As to quaternary structure, part of the 50S ribosomal subunit.

Its function is as follows. One of the primary rRNA binding proteins, this protein initially binds near the 5'-end of the 23S rRNA. It is important during the early stages of 50S assembly. It makes multiple contacts with different domains of the 23S rRNA in the assembled 50S subunit and ribosome. Functionally, forms part of the polypeptide exit tunnel. The sequence is that of Large ribosomal subunit protein uL4 from Aliivibrio salmonicida (strain LFI1238) (Vibrio salmonicida (strain LFI1238)).